The primary structure comprises 801 residues: Leucine--tRNA ligase (801 aa).

A 'HIGH' region motif is present at residues 39 to 50 (PYPSGAGIHVGH). The 'KMSKS' region motif lies at 578 to 582 (KMSKS). Lysine 581 contributes to the ATP binding site.

This sequence belongs to the class-I aminoacyl-tRNA synthetase family.

It localises to the cytoplasm. It carries out the reaction tRNA(Leu) + L-leucine + ATP = L-leucyl-tRNA(Leu) + AMP + diphosphate. The protein is Leucine--tRNA ligase of Mesoplasma florum (strain ATCC 33453 / NBRC 100688 / NCTC 11704 / L1) (Acholeplasma florum).